The primary structure comprises 263 residues: Lens fiber major intrinsic protein (263 aa).

Residues 1 to 9 (MWELRSASF) are Cytoplasmic-facing. A helical membrane pass occupies residues 10–29 (WRAICAEFFASLFYVFFGLG). Residues 30–41 (ASLRWAPGPLHV) lie on the Extracellular side of the membrane. A helical membrane pass occupies residues 42–59 (LQVALAFGLALATLVQAV). Over 60–61 (GH) the chain is Cytoplasmic. Positions 62-77 (ISGAHVNPAVTFAFLV) form an intramembrane region, discontinuously helical. An NPA 1 motif is present at residues 68–70 (NPA). Topologically, residues 78–82 (GSQMS) are cytoplasmic. Residues 83–106 (LLRAICYMVAQLLGAVAGAAVLYS) form a helical membrane-spanning segment. Residues 107 to 127 (VTPPAVRGNLALNTLHPGVSV) are Extracellular-facing. A helical transmembrane segment spans residues 128–148 (GQATIVEIFLTLQFVLCIFAT). The Cytoplasmic portion of the chain corresponds to 149–156 (YDERRNGR). The chain crosses the membrane as a helical span at residues 157 to 175 (LGSVALAVGFSLTLGHLFG). Residues 176–178 (MYY) are Extracellular-facing. An intramembrane region (discontinuously helical) is located at residues 179-193 (TGAGMNPARSFAPAI). The NPA 2 signature appears at 184–186 (NPA). Topologically, residues 194–200 (LTRNFTN) are extracellular. The chain crosses the membrane as a helical span at residues 201-222 (HWVYWVGPVIGAGLGSLLYDFL). At 223–263 (LFPRLKSVSERLSILKGSRPSESNGQPEVTGEPVELKTQAL) the chain is on the cytoplasmic side. The tract at residues 227 to 237 (LKSVSERLSIL) is interaction with CALM. Ser235 bears the Phosphoserine mark. Residues 239-263 (GSRPSESNGQPEVTGEPVELKTQAL) are disordered. At Ser243 the chain carries Phosphoserine; by PKA. Ser245 is subject to Phosphoserine. At Asn246 the chain carries Deamidated asparagine.

The protein belongs to the MIP/aquaporin (TC 1.A.8) family. Homotetramer; each monomer provides an independent water pore. Two homotetramers on opposing membranes can dimerize, forming a cell-cell junction. Interacts with CALM; the calcium-calmodulin/CALM complex interacts with the cytoplasmic domains of two aquaporins, leading to channel closure. Interacts with BFSP1 (via C-terminus); prevents calcium-dependent inhibition of the water channel activity. In terms of processing, fatty acylated at Met-1 and Lys-238. The acyl modifications, in decreasing order of ion abundance, are: oleoyl (C18:1) &gt; palmitoyl (C16:0) &gt; stearoyl (C18:0) &gt; eicosenoyl (C20:1) &gt; dihomo-gamma-linolenoyl (C20:3) &gt; palmitoleoyl (C16:1) &gt; eicosadienoyl (C20:2). Post-translationally, subject to partial proteolytic cleavage in the eye lens core. Partial proteolysis promotes interactions between tetramers from adjoining membranes. Major component of lens fiber junctions.

It is found in the cell membrane. The protein resides in the cell junction. It catalyses the reaction H2O(in) = H2O(out). Its activity is regulated as follows. The water channel activity is inhibited by calcium through calmodulin/CALM. Aquaporins form homotetrameric transmembrane channels, with each monomer independently mediating water transport across the plasma membrane along its osmotic gradient. Specifically expressed in lens fiber cells, this aquaporin is crucial for maintaining lens water homeostasis and transparency. Beyond water permeability, it also acts as a cell-to-cell adhesion molecule, forming thin junctions between lens fiber cells that are essential for maintaining the ordered structure and transparency of the lens. This Bos taurus (Bovine) protein is Lens fiber major intrinsic protein.